Here is a 97-residue protein sequence, read N- to C-terminus: DNA-binding protein HU (97 aa).

It belongs to the bacterial histone-like protein family. Has been isolated in complexes with 5S rRNA and bL25, and with 5S rRNA, bL25 and uL5. Homodimer.

Histone-like DNA-binding protein which is capable of wrapping DNA to stabilize it, and thus to prevent its denaturation under extreme environmental conditions. This chain is DNA-binding protein HU, found in Thermus thermophilus (strain ATCC 27634 / DSM 579 / HB8).